The chain runs to 314 residues: WD repeat domain-containing protein 83 (314 aa).

7 WD repeats span residues 23 to 62, 65 to 104, 107 to 146, 151 to 188, 189 to 228, 231 to 272, and 275 to 313; these read CNQG…LLKT, GHGY…VVRK, GHAG…PEAI, EAKD…MCAD, YLGS…LLGE, GHQN…LVLK, and VGKA…EEGG.

Belongs to the WD repeat MORG1 family.

Its subcellular location is the cytoplasm. Molecular scaffold protein for various multimeric protein complexes. Acts as a module in the assembly of a multicomponent scaffold for the ERK pathway, linking ERK responses to specific agonists. Also involved in response to hypoxia by acting as a negative regulator of HIF1A/HIF-1-alpha. The polypeptide is WD repeat domain-containing protein 83 (wdr83) (Xenopus tropicalis (Western clawed frog)).